An 88-amino-acid chain; its full sequence is Putative membrane protein insertion efficiency factor (88 aa).

Positions 68–88 (VPPPNSDTRARGEADARSHRL) are disordered. The segment covering 75–88 (TRARGEADARSHRL) has biased composition (basic and acidic residues).

The protein belongs to the UPF0161 family.

The protein localises to the cell inner membrane. Its function is as follows. Could be involved in insertion of integral membrane proteins into the membrane. The polypeptide is Putative membrane protein insertion efficiency factor (Burkholderia ambifaria (strain MC40-6)).